We begin with the raw amino-acid sequence, 556 residues long: Formate--tetrahydrofolate ligase (556 aa).

65-72 serves as a coordination point for ATP; the sequence is TPAGEGKS.

This sequence belongs to the formate--tetrahydrofolate ligase family.

The enzyme catalyses (6S)-5,6,7,8-tetrahydrofolate + formate + ATP = (6R)-10-formyltetrahydrofolate + ADP + phosphate. Its pathway is one-carbon metabolism; tetrahydrofolate interconversion. The sequence is that of Formate--tetrahydrofolate ligase from Streptococcus pneumoniae serotype 19F (strain G54).